A 1273-amino-acid polypeptide reads, in one-letter code: Ribulose bisphosphate carboxylase small subunit, chloroplastic (1273 aa).

A chloroplast-targeting transit peptide spans 1-134 (MPFDRQPLLS…AVLPFTSEKD (134 aa)). 7 consecutive propeptides follow at residues 269–278 (GMAAMTGEKD), 412–421 (GMAAMTGEKD), 556–565 (GMAAMTGEKD), 699–708 (GMAAMTGEKD), 844–853 (GMAAMTGEKE), 987–996 (GMAAMTGEKD), and 1131–1140 (GMAAMTGEKE).

Belongs to the RuBisCO small chain family. In terms of assembly, heterohexadecamer of 8 large and 8 small subunits. In terms of processing, eight small subunits are processed from a large polyprotein. All start with the same sequence but there is more heterogeneity at the C-terminus.

It is found in the plastid. The protein resides in the chloroplast. In terms of biological role, ruBisCO catalyzes two reactions: the carboxylation of D-ribulose 1,5-bisphosphate, the primary event in carbon dioxide fixation, as well as the oxidative fragmentation of the pentose substrate. Both reactions occur simultaneously and in competition at the same active site. Although the small subunit is not catalytic it is essential for maximal activity. This is Ribulose bisphosphate carboxylase small subunit, chloroplastic from Euglena gracilis.